Consider the following 310-residue polypeptide: Thioredoxin reductase (310 aa).

FAD is bound at residue N34–Q41. Cysteines 135 and 138 form a disulfide. An FAD-binding site is contributed by D281 to A290.

This sequence belongs to the class-II pyridine nucleotide-disulfide oxidoreductase family. In terms of assembly, homodimer. FAD serves as cofactor.

Its subcellular location is the cytoplasm. The catalysed reaction is [thioredoxin]-dithiol + NADP(+) = [thioredoxin]-disulfide + NADPH + H(+). The protein is Thioredoxin reductase (trxB) of Rickettsia conorii (strain ATCC VR-613 / Malish 7).